Here is a 206-residue protein sequence, read N- to C-terminus: Isochorismatase family protein 1A (206 aa).

The protein belongs to the isochorismatase family.

The polypeptide is Isochorismatase family protein 1A (Dictyostelium discoideum (Social amoeba)).